We begin with the raw amino-acid sequence, 573 residues long: Threonine--tRNA ligase (573 aa).

Residues 174 to 474 are catalytic; it reads DHRRINKILE…LLEQTKGALD (301 aa). The Zn(2+) site is built by Cys268, His319, and His451.

Belongs to the class-II aminoacyl-tRNA synthetase family. As to quaternary structure, homodimer. Requires Zn(2+) as cofactor.

The protein resides in the cytoplasm. It catalyses the reaction tRNA(Thr) + L-threonine + ATP = L-threonyl-tRNA(Thr) + AMP + diphosphate + H(+). Catalyzes the attachment of threonine to tRNA(Thr) in a two-step reaction: L-threonine is first activated by ATP to form Thr-AMP and then transferred to the acceptor end of tRNA(Thr). Also edits incorrectly charged L-seryl-tRNA(Thr). This Mycoplasmoides gallisepticum (strain R(low / passage 15 / clone 2)) (Mycoplasma gallisepticum) protein is Threonine--tRNA ligase.